Reading from the N-terminus, the 297-residue chain is Acetyl-coenzyme A carboxylase carboxyl transferase subunit beta (297 aa).

Residues 1-23 (MSWIERILGRTSSSSSSSKSKVP) are disordered. Residues 26-295 (VWTKCTSCEQ…PFKTAELIVE (270 aa)) form the CoA carboxyltransferase N-terminal domain. The Zn(2+) site is built by Cys30, Cys33, Cys49, and Cys52. The C4-type zinc-finger motif lies at 30 to 52 (CTSCEQVLYSEELKRNMHVCPKC).

It belongs to the AccD/PCCB family. In terms of assembly, acetyl-CoA carboxylase is a heterohexamer composed of biotin carboxyl carrier protein (AccB), biotin carboxylase (AccC) and two subunits each of ACCase subunit alpha (AccA) and ACCase subunit beta (AccD). Zn(2+) serves as cofactor.

The protein resides in the cytoplasm. The catalysed reaction is N(6)-carboxybiotinyl-L-lysyl-[protein] + acetyl-CoA = N(6)-biotinyl-L-lysyl-[protein] + malonyl-CoA. It participates in lipid metabolism; malonyl-CoA biosynthesis; malonyl-CoA from acetyl-CoA: step 1/1. Its function is as follows. Component of the acetyl coenzyme A carboxylase (ACC) complex. Biotin carboxylase (BC) catalyzes the carboxylation of biotin on its carrier protein (BCCP) and then the CO(2) group is transferred by the transcarboxylase to acetyl-CoA to form malonyl-CoA. The chain is Acetyl-coenzyme A carboxylase carboxyl transferase subunit beta from Actinobacillus pleuropneumoniae serotype 3 (strain JL03).